Reading from the N-terminus, the 1500-residue chain is Copper-transporting ATPase 1 (1500 aa).

The Cytoplasmic segment spans residues 1-653; that stretch reads MDPSMGVNSV…KREIRQWRRS (653 aa). 2 consecutive HMA domains span residues 8-74 and 85-151; these read NSVT…FDAV and TDTL…LDTG. Cu(+) contacts are provided by threonine 18, cysteine 19, and cysteine 22. At threonine 152 the chain carries Phosphothreonine. Positions 171 to 237 constitute an HMA 3 domain; it reads VVLKMKVEGM…QIEAMGFPAF (67 aa). Cu(+) is bound by residues cysteine 182 and cysteine 185. A Phosphoserine modification is found at serine 270. One can recognise an HMA 4 domain in the interval 277–343; it reads STATFIIDGM…AIEAVSPGLY (67 aa). Positions 288 and 291 each coordinate Cu(+). Position 327 is a phosphothreonine (threonine 327). Phosphoserine is present on residues serine 339, serine 353, serine 357, and serine 362. HMA domains follow at residues 377–443, 488–554, and 564–630; these read QETV…FDAT, SKCY…FGAT, and GVLE…FEAS. Residues cysteine 388, cysteine 391, cysteine 499, cysteine 502, cysteine 575, and cysteine 578 each contribute to the Cu(+) site. Residues 654-675 form a helical membrane-spanning segment; that stretch reads FLVSLFFCIPVMGLMIYMMVMD. Residues 676–714 lie on the Extracellular side of the membrane; sequence HHFATLHHNQNMSKEEMINLHSSMFLERQILPGLSVMNL. The N-linked (GlcNAc...) asparagine glycan is linked to asparagine 686. The helical transmembrane segment at 715 to 734 threads the bilayer; the sequence is LSFLLCVPVQFFGGWYFYIQ. Residues 735-741 lie on the Cytoplasmic side of the membrane; the sequence is AYKALKH. A helical transmembrane segment spans residues 742–762; it reads KTANMDVLIVLATTIAFAYSL. The Extracellular segment spans residues 763–781; sequence IILLVAMYERAKVNPITFF. The chain crosses the membrane as a helical span at residues 782–802; sequence DTPPMLFVFIALGRWLEHIAK. Over 803–936 the chain is Cytoplasmic; sequence GKTSEALAKL…KAPIQQFADK (134 aa). The helical transmembrane segment at 937 to 959 threads the bilayer; the sequence is LSGYFVPFIVFVSIATLLVWIVI. The Extracellular segment spans residues 960 to 989; sequence GFLNFEIVETYFPGYNRSISRTETIIRFAF. A glycan (N-linked (GlcNAc...) asparagine) is linked at asparagine 975. The helical transmembrane segment at 990–1011 threads the bilayer; sequence QASITVLCIACPCSLGLATPTA. The Cytoplasmic portion of the chain corresponds to 1012 to 1356; that stretch reads VMVGTGVGAQ…LSRKTVKRIR (345 aa). Residue aspartate 1044 is the 4-aspartylphosphate intermediate of the active site. Glutamate 1081 is an ATP binding site. Phosphothreonine is present on threonine 1212. 2 residues coordinate Mg(2+): aspartate 1301 and aspartate 1305. The helical transmembrane segment at 1357 to 1374 threads the bilayer; it reads INFVFALIYNLVGIPIAA. Over 1375–1385 the chain is Extracellular; it reads GVFMPIGLVLQ. The helical transmembrane segment at 1386 to 1405 threads the bilayer; it reads PWMGSAAMAASSVSVVLSSL. The Cytoplasmic portion of the chain corresponds to 1406–1500; that stretch reads FLKLYRKPTY…DFREDDDTAL (95 aa). Phosphoserine occurs at positions 1430, 1432, 1460, 1463, and 1466. The Endocytosis signal signature appears at 1467–1468; that stretch reads LL. Residues serine 1469, serine 1473, serine 1476, and serine 1486 each carry the phosphoserine modification. Residues 1486 to 1500 form a PDZD11-binding region; that stretch reads SLLVGDFREDDDTAL. The Endocytosis signal motif lies at 1487–1488; sequence LL.

It belongs to the cation transport ATPase (P-type) (TC 3.A.3) family. Type IB subfamily. Monomer. Interacts with PDZD11. Interacts with ATOX1 and COMMD1. Interacts with TYRP1. Directly interacts with SOD3; this interaction is copper-dependent and is required for SOD3 activity. Widely expressed including in heart, brain, lung, muscle, kidney, pancreas, and to a lesser extent placenta. Expressed in fibroblasts, aortic smooth muscle cells, aortic endothelial cells and umbilical vein endothelial cells (at protein level). As to expression, expressed in cerebellum and brain cortex.

It is found in the golgi apparatus. It localises to the trans-Golgi network membrane. The protein resides in the cell membrane. Its subcellular location is the melanosome membrane. The protein localises to the early endosome membrane. It is found in the cell projection. It localises to the axon. The protein resides in the dendrite. Its subcellular location is the postsynaptic density. The protein localises to the cytoplasm. It is found in the cytosol. It localises to the endoplasmic reticulum. It carries out the reaction Cu(+)(in) + ATP + H2O = Cu(+)(out) + ADP + phosphate + H(+). In terms of biological role, ATP-driven copper (Cu(+)) ion pump that plays an important role in intracellular copper ion homeostasis. Within a catalytic cycle, acquires Cu(+) ion from donor protein on the cytoplasmic side of the membrane and delivers it to acceptor protein on the lumenal side. The transfer of Cu(+) ion across the membrane is coupled to ATP hydrolysis and is associated with a transient phosphorylation that shifts the pump conformation from inward-facing to outward-facing state. Under physiological conditions, at low cytosolic copper concentration, it is localized at the trans-Golgi network (TGN) where it transfers Cu(+) ions to cuproenzymes of the secretory pathway. Upon elevated cytosolic copper concentrations, it relocalizes to the plasma membrane where it is responsible for the export of excess Cu(+) ions. May play a dual role in neuron function and survival by regulating cooper efflux and neuronal transmission at the synapse as well as by supplying Cu(+) ions to enzymes such as PAM, TYR and SOD3. In the melanosomes of pigmented cells, provides copper cofactor to TYR to form an active TYR holoenzyme for melanin biosynthesis. This chain is Copper-transporting ATPase 1, found in Homo sapiens (Human).